The chain runs to 393 residues: Probable pectinesterase 8 (393 aa).

The first 19 residues, methionine 1–alanine 19, serve as a signal peptide directing secretion. N-linked (GlcNAc...) asparagine glycans are attached at residues asparagine 100, asparagine 113, asparagine 140, asparagine 156, and asparagine 163. Residue threonine 165 participates in substrate binding. Asparagine 182 carries N-linked (GlcNAc...) asparagine glycosylation. A substrate-binding site is contributed by glutamine 200. Aspartate 223 serves as the catalytic Proton donor. The Nucleophile role is filled by aspartate 244. Asparagine 295 is a glycosylation site (N-linked (GlcNAc...) asparagine). Arginine 308 contacts substrate. Asparagine 350, asparagine 369, and asparagine 378 each carry an N-linked (GlcNAc...) asparagine glycan.

The protein belongs to the pectinesterase family. Expressed in siliques.

It is found in the secreted. Its subcellular location is the cell wall. The catalysed reaction is [(1-&gt;4)-alpha-D-galacturonosyl methyl ester](n) + n H2O = [(1-&gt;4)-alpha-D-galacturonosyl](n) + n methanol + n H(+). The protein operates within glycan metabolism; pectin degradation; 2-dehydro-3-deoxy-D-gluconate from pectin: step 1/5. In terms of biological role, acts in the modification of cell walls via demethylesterification of cell wall pectin. In Arabidopsis thaliana (Mouse-ear cress), this protein is Probable pectinesterase 8 (PME8).